We begin with the raw amino-acid sequence, 650 residues long: Chaperone protein DnaK (650 aa).

Position 200 is a phosphothreonine; by autocatalysis (Thr-200). The segment at 614 to 634 (AGAAGAAGAAEGAAHAGGAQQ) is disordered.

Belongs to the heat shock protein 70 family.

In terms of biological role, acts as a chaperone. This chain is Chaperone protein DnaK, found in Burkholderia cenocepacia (strain ATCC BAA-245 / DSM 16553 / LMG 16656 / NCTC 13227 / J2315 / CF5610) (Burkholderia cepacia (strain J2315)).